The sequence spans 398 residues: Lipase member N (398 aa).

The signal sequence occupies residues 1-18; it reads MMWLLLTTTCLICGTLNA. The region spanning 79–379 is the AB hydrolase-1 domain; that stretch reads PVVYMQHALF…DWNHFDFVWG (301 aa). The active-site Nucleophile is the S173. Residues C247 and C256 are joined by a disulfide bond. A glycan (N-linked (GlcNAc...) asparagine) is linked at N272. Active-site charge relay system residues include D344 and H373.

The protein belongs to the AB hydrolase superfamily. Lipase family. As to expression, highly expressed in the epidermis in the granular keratinocytes. Also detected in other tissues, although at much lower levels, including lung and spleen.

It is found in the secreted. It carries out the reaction a sterol ester + H2O = a sterol + a fatty acid + H(+). It catalyses the reaction a triacylglycerol + H2O = a 1,2-diacylglycerol + a fatty acid + H(+). The enzyme catalyses a triacylglycerol + H2O = a diacylglycerol + a fatty acid + H(+). The catalysed reaction is a cholesterol ester + H2O = cholesterol + a fatty acid + H(+). In terms of biological role, plays a highly specific role in the last step of keratinocyte differentiation. Contains two distinct domains: the alpha/beta hydrolase fold and the abhydrolase-associated lipase region, also features the consensus sequence of the active site of a genuine lipase. May have an essential function in lipid metabolism of the most differentiated epidermal layers. The sequence is that of Lipase member N (LIPN) from Homo sapiens (Human).